We begin with the raw amino-acid sequence, 241 residues long: Chloride intracellular channel protein 1 (241 aa).

Ala2 carries the N-acetylalanine modification. Positions 2-90 (AEEQPQVELF…EEFLEAVLCP (89 aa)) are required for insertion into the membrane. Position 13 is an N6-acetyllysine (Lys13). The G-site signature appears at 24–27 (CPFS). Residues Cys24 and Cys59 are joined by a disulfide bond. A helical transmembrane segment spans residues 26-46 (FSQRLFMVLWLKGVTFNVTTV). One can recognise a GST C-terminal domain in the interval 93–233 (YPKLAALNPE…PDDEEIELAY (141 aa)). The residue at position 119 (Lys119) is an N6-acetyllysine. Ser121 carries the post-translational modification Phosphoserine. Lys131 carries the N6-acetyllysine modification. Residues Ser156 and Ser211 each carry the phosphoserine modification. Tyr233 carries the phosphotyrosine modification.

This sequence belongs to the chloride channel CLIC family. In terms of assembly, monomer. Homodimer (in vitro). Interacts with TRAPPC2. Dimerization requires a conformation change that leads to the exposure of a large hydrophobic surface. In vivo, this may lead to membrane insertion.

It is found in the nucleus. The protein resides in the nucleus membrane. Its subcellular location is the cytoplasm. It localises to the cell membrane. The protein localises to the endoplasmic reticulum. It carries out the reaction L-dehydroascorbate + 2 glutathione = glutathione disulfide + L-ascorbate. The enzyme catalyses chloride(in) = chloride(out). It catalyses the reaction iodide(out) = iodide(in). The catalysed reaction is thiocyanate(in) = thiocyanate(out). It carries out the reaction nitrate(in) = nitrate(out). The enzyme catalyses bromide(in) = bromide(out). It catalyses the reaction fluoride(in) = fluoride(out). Its function is as follows. In the soluble state, catalyzes glutaredoxin-like thiol disulfide exchange reactions with reduced glutathione as electron donor. Reduces selenite and dehydroascorbate and may act as an antioxidant during oxidative stress response. Can insert into membranes and form voltage-dependent multi-ion conductive channels. Membrane insertion seems to be redox-regulated and may occur only under oxidizing conditions. Involved in regulation of the cell cycle. The sequence is that of Chloride intracellular channel protein 1 (CLIC1) from Oryctolagus cuniculus (Rabbit).